The primary structure comprises 969 residues: MKKRDFLEWLRSVEAKWQSKWMEKKIFEPRIEPDKPKYFITVPYPYTNAPLHIGHGRTYTIGDIIARYKRLRGYNVLFPMAFHITGTPIIAISERISRGEEEIINRYKSYIAKYVKDPVEIEKIIESFKDPLNLAVFFAERVHMDFDALGYSIDWRRRFHTGEPIYNAFVTWQFLKLREKGLIKRGDHVVTYCLLHKQPEGEDDIQDADVNPVEILEFTAIKFKLLGEENTYLVAATLRPETLFGATNLWVKPDADYVVVEWRGENIIVSKEALVKLQHQHPLDEFKVVGEMKGRELVGKKVVSPLGNELIVLPADFVDPDNATGIVYSEPSDAPYDYVALMELKKNSEKLAMYGVDPEVVKKIEPIKIIDVPGIKGHHAGIVVEEMGISSQFDPRLVEATKIVYREQYYKGVMIVDDPEFKGLSVSEAKEKIKKKLLRENKGFVFYELNRKAYCRAGGKIIAAKIIGQWFIDYSVPWWKEEAKKYVSEKMRIIPVKYKKAMLDAIDWLERRPCARKRGLGTRLPFDPEWVIESLSDSTIYMAFYTIAHLIRKHNIKPEQLKPQVFDYVFLGKGDPEEISEDTGIPLKALEEMRQEFNYWYPVDQRHTGIAHISNHLSFFIYHHIAIFPRKHWPKMITLNEMVIREGTKMSKSKGNVILLRDIAEKYSADLFRLYIAGAANLDTVLDWREKEVERVIDSLKKFTAIAEKAIRTKCGTYSHDKYIDKWFLSKFNRLLAEATNALDNMEIRDYVQKMFYDVMVSIDHYRERTSNEETICMIKRILSKWLKSLNPVIPHLTEEIWSWMGKEEFLSLEKWPEIDYKAINEEVEYLEEAIEALIEDIKNVLNILSPKPKHAYIVVASPWKREVIEMIEKGMDRREIIRTIRDKYGLKGREKEIVYVIQECSRTPCKRALKIDPIHEYEAYNEARQYIAKKTGLHIEVYWEEEAKAKNIPKAEKTLPLKPSFYLY.

The short motif at 45–55 is the 'HIGH' region element; that stretch reads PYTNAPLHIGH. The short motif at 649–653 is the 'KMSKS' region element; the sequence is KMSKS. Lys652 is an ATP binding site.

Belongs to the class-I aminoacyl-tRNA synthetase family.

It localises to the cytoplasm. The enzyme catalyses tRNA(Leu) + L-leucine + ATP = L-leucyl-tRNA(Leu) + AMP + diphosphate. This Staphylothermus marinus (strain ATCC 43588 / DSM 3639 / JCM 9404 / F1) protein is Leucine--tRNA ligase.